Consider the following 130-residue polypeptide: Small ribosomal subunit protein uS8z/uS8w (130 aa).

This sequence belongs to the universal ribosomal protein uS8 family.

It localises to the cytoplasm. In Arabidopsis thaliana (Mouse-ear cress), this protein is Small ribosomal subunit protein uS8z/uS8w (RPS15AA).